A 1338-amino-acid chain; its full sequence is Insulin receptor substrate 2 (1338 aa).

The span at 1–12 shows a compositional bias: pro residues; the sequence is MASPPRHGPPGP. 2 disordered regions span residues 1–31 and 49–72; these read MASP…NHSV and VLRG…QPPR. The PH domain occupies 16-144; sequence DGPNLNNNNN…WYRALTDLVS (129 aa). Residues 19–28 are compositionally biased toward low complexity; sequence NLNNNNNNNN. The span at 53-66 shows a compositional bias: gly residues; the sequence is PGAGGDEATAGGGS. Residues 194–298 enclose the IRS-type PTB domain; that stretch reads YREVWQVNLK…EAMKALKELF (105 aa). Positions 303–411 are disordered; it reads RSKSQSSGSS…SHTLSGGCGG (109 aa). 2 positions are modified to phosphoserine: Ser306 and Ser346. At Thr350 the chain carries Phosphothreonine. Ser365, Ser384, Ser388, and Ser391 each carry phosphoserine. At Arg412 the chain carries Omega-N-methylarginine. A disordered region spans residues 428–537; sequence SRSMSMPVAH…PPARDGGGGG (110 aa). The segment covering 444-453 has biased composition (low complexity); the sequence is SPGSLSSSSG. Residues 459–471 are compositionally biased toward pro residues; it reads YPPPPGPHPPLPH. The segment covering 475–493 has biased composition (low complexity); it reads HGPGQRPSSGSASASGSPS. Phosphothreonine is present on Thr520. Phosphoserine is present on Ser523. Position 527 is a phosphothreonine (Thr527). Phosphotyrosine; by INSR is present on Tyr540. A YXXM motif 1 motif is present at residues 540–543; sequence YGYM. The residue at position 560 (Ser560) is a Phosphoserine; by PLK1. Ser577 carries the post-translational modification Phosphoserine. A phosphothreonine mark is found at Thr579 and Thr580. Phosphoserine is present on Ser594. The YXXM motif 2 signature appears at 598 to 601; the sequence is YTLM. 2 positions are modified to phosphoserine: Ser608 and Ser620. 2 positions are modified to phosphotyrosine; by INSR: Tyr653 and Tyr675. Short sequence motifs (YXXM motif) lie at residues 653 to 656 and 675 to 678; these read YMPM. Residues Ser679 and Ser682 each carry the phosphoserine modification. Residues 703–719 show a composition bias toward low complexity; it reads PSAGPAGPAPTSAAGRT. The segment at 703-739 is disordered; it reads PSAGPAGPAPTSAAGRTFPASGGGYKASSPAESSPED. Residues Ser735 and Ser736 each carry the phosphoserine modification. The YXXM motif 5 signature appears at 742 to 745; sequence YMRM. At Ser770 the chain carries Phosphoserine. Position 779 is a phosphothreonine (Thr779). Ser805 bears the Phosphoserine mark. Residues 823–826 carry the YXXM motif 6 motif; that stretch reads YVLM. A Phosphoserine modification is found at Ser828. Residues 840-1101 form a disordered region; it reads EPQATPGPSQ…KPEAARVASP (262 aa). Residues 859-870 show a composition bias toward pro residues; sequence TQPPHPVVPSPV. The residue at position 915 (Ser915) is a Phosphoserine. At Tyr919 the chain carries Phosphotyrosine; by INSR. Positions 938-967 are enriched in low complexity; it reads LLASAASSSSLLSASSPASSLGSGTPGTSS. Phosphoserine is present on Ser973. Tyr978 bears the Phosphotyrosine; by INSR mark. Residues 1013 to 1022 show a composition bias toward pro residues; it reads PYPPLPPRPS. A YXXM motif 7 motif is present at residues 1072-1075; it reads YTEM. At Thr1082 the chain carries Phosphothreonine. The span at 1083 to 1093 shows a compositional bias: pro residues; the sequence is PPQPIAAPPKP. Ser1100 is subject to Phosphoserine. Ser1109 carries the phosphoserine; by PLK1 modification. Residues 1121–1296 form a disordered region; the sequence is LQASQPPDPH…TRSLGGLISA (176 aa). The span at 1150–1165 shows a compositional bias: low complexity; sequence ETFSSTTTVTPVSPSF. Thr1159 bears the Phosphothreonine mark. 4 positions are modified to phosphoserine: Ser1162, Ser1174, Ser1176, and Ser1186. Positions 1174–1183 are enriched in polar residues; it reads SASVENVSLR. Positions 1188–1198 are enriched in gly residues; the sequence is GGVGVGPGGGD. Ser1203 carries the phosphoserine modification. Over residues 1224-1236 the composition is skewed to gly residues; the sequence is QPGGLVGCPGSGG. Tyr1253 is subject to Phosphotyrosine; by INSR. Over residues 1263-1277 the composition is skewed to pro residues; the sequence is GLPPQPQPPPPPLPQ. Lys1331 is covalently cross-linked (Glycyl lysine isopeptide (Lys-Gly) (interchain with G-Cter in ubiquitin)).

Interacts with PHIP. Interacts with SH2B1; this interaction enhances leptin-induced activation of the PI3-kinase pathway. Interacts with GRB2. Interacts with PIK3R1. Interacts with DVL2; this interaction promotes the Wnt/beta-catenin signaling pathway. In terms of processing, phosphorylation fluctuates in a cell-cycle dependent manner with hyperphosphorylation during mitosis. Phosphorylated at Ser-560 and Ser-1109 by PLK1; these phosphorylations prevent the activation of the PI3K pathway upon growth factor stimulation by inhibiting the binding between IRS2 and the PI3K pathway components and increasing the level of IRS2 protein degradation. In addition, they prevent premature mitotic exit. Monoubiquitinated by NEDD4; leading to enhanced IGF1 signaling. During cell cycle, ubiquitination and proteasomal degradation are controlled by FZR1.

Its subcellular location is the cytoplasm. The protein localises to the cytosol. Functionally, signaling adapter protein that participates in the signal transduction from two prominent receptor tyrosine kinases, insulin receptor/INSR and insulin-like growth factor I receptor/IGF1R. Plays therefore an important role in development, growth, glucose homeostasis as well as lipid metabolism. Upon phosphorylation by the insulin receptor, functions as a signaling scaffold that propagates insulin action through binding to SH2 domain-containing proteins including the p85 regulatory subunit of PI3K, NCK1, NCK2, GRB2 or SHP2. Recruitment of GRB2 leads to the activation of the guanine nucleotide exchange factor SOS1 which in turn triggers the Ras/Raf/MEK/MAPK signaling cascade. Activation of the PI3K/AKT pathway is responsible for most of insulin metabolic effects in the cell, and the Ras/Raf/MEK/MAPK is involved in the regulation of gene expression and in cooperation with the PI3K pathway regulates cell growth and differentiation. Acts a positive regulator of the Wnt/beta-catenin signaling pathway through suppression of DVL2 autophagy-mediated degradation leading to cell proliferation. Plays a role in cell cycle progression by promoting a robust spindle assembly checkpoint (SAC) during M-phase. In macrophages, IL4-induced tyrosine phosphorylation of IRS2 leads to the recruitment and activation of phosphoinositide 3-kinase (PI3K). This chain is Insulin receptor substrate 2 (IRS2), found in Homo sapiens (Human).